The following is a 176-amino-acid chain: Ribosome maturation factor RimM (176 aa).

The PRC barrel domain occupies Glu-100–Leu-173.

The protein belongs to the RimM family. As to quaternary structure, binds ribosomal protein uS19.

Its subcellular location is the cytoplasm. In terms of biological role, an accessory protein needed during the final step in the assembly of 30S ribosomal subunit, possibly for assembly of the head region. Essential for efficient processing of 16S rRNA. May be needed both before and after RbfA during the maturation of 16S rRNA. It has affinity for free ribosomal 30S subunits but not for 70S ribosomes. This is Ribosome maturation factor RimM from Prochlorococcus marinus (strain MIT 9313).